The following is a 266-amino-acid chain: ATG8-interacting protein 2 (266 aa).

Residues 14–17 (WEVV) carry the AIM (Atg8-family-interacting motif) motif. A helical membrane pass occupies residues 191–210 (TNTVWSICIAAAVMGIVILG). Residues 218 to 221 (WQIL) carry the AIM (Atg8-family-interacting motif) motif.

As to quaternary structure, interacts with ATG8F.

The protein localises to the endoplasmic reticulum membrane. Its subcellular location is the membrane. In terms of biological role, may be involved in salt stress-induced vesicle-to-vacuole trafficking pathway. Through its interaction with ATG8F, may enable delivery of the vesicle bodies to the vacuole by an autophagic pathway. Plays a role in seed germination in response to exogenous abscisic acid (ABA) treatment. The polypeptide is ATG8-interacting protein 2 (Arabidopsis thaliana (Mouse-ear cress)).